We begin with the raw amino-acid sequence, 1563 residues long: Integrator complex subunit 5-like protein (1563 aa).

Basic and acidic residues-rich tracts occupy residues 1–21 (MKEE…RNDN) and 31–44 (EDWR…KNEN). 3 disordered regions span residues 1 to 63 (MKEE…YDDD), 102 to 208 (KKSK…NITY), and 270 to 310 (NSLN…QQNP). The segment covering 52-63 (GDSDDDDYYDDD) has biased composition (acidic residues). 2 stretches are compositionally biased toward low complexity: residues 109 to 133 (TAAT…TATA) and 141 to 202 (NNLL…NNNN). A helical membrane pass occupies residues 350–370 (DSIINWSLSTLTIITRLLIIL). Residues 381–398 (QQQQQQQQQQQQQQQQQQ) show a composition bias toward low complexity. Disordered stretches follow at residues 381–417 (QQQQ…RQPI), 466–498 (SKSS…SSKT), 637–694 (FDNN…DNSS), and 784–828 (ILNN…SQEI). A compositionally biased stretch (pro residues) spans 405–414 (FPPPPPPPLR). 3 stretches are compositionally biased toward low complexity: residues 468–496 (SSSS…SSSS), 639–686 (NNNN…NNNN), and 786–824 (NNNN…QQQQ). Residues 877-897 (IIIKLISLIGMDSIYSSLIIL) traverse the membrane as a helical segment. Disordered stretches follow at residues 1154–1173 (SGNF…DEYG) and 1268–1303 (KQRM…DQNE). Residues 1160–1172 (GDDDDDEYGDDEY) are compositionally biased toward acidic residues. Positions 1277 to 1288 (SIQQNGNINNEQ) are enriched in low complexity. Positions 1289 to 1303 (QQEEDDNDDADDQNE) are enriched in acidic residues.

The protein belongs to the Integrator subunit 5 family. Component of the Integrator complex. The core complex associates with protein phosphatase 2A subunits, to form the Integrator-PP2A (INTAC) complex.

The protein localises to the nucleus. It is found in the cytoplasm. The protein resides in the nucleus membrane. Component of the integrator complex, a multiprotein complex that terminates RNA polymerase II (Pol II) transcription in the promoter-proximal region of genes. The integrator complex provides a quality checkpoint during transcription elongation by driving premature transcription termination of transcripts that are unfavorably configured for transcriptional elongation: the complex terminates transcription by (1) catalyzing dephosphorylation of the C-terminal domain (CTD) of Pol II subunit polr2a, (2) degrading the exiting nascent RNA transcript via endonuclease activity and (3) promoting the release of Pol II from bound DNA. The integrator complex is also involved in terminating the synthesis of non-coding Pol II transcripts, such as enhancer RNAs (eRNAs), small nuclear RNAs (snRNAs), telomerase RNAs and long non-coding RNAs (lncRNAs). This is Integrator complex subunit 5-like protein from Dictyostelium discoideum (Social amoeba).